The primary structure comprises 263 residues: Trans-aconitate 2-methyltransferase (263 aa).

This sequence belongs to the methyltransferase superfamily. Tam family.

It localises to the cytoplasm. The enzyme catalyses trans-aconitate + S-adenosyl-L-methionine = (E)-3-(methoxycarbonyl)pent-2-enedioate + S-adenosyl-L-homocysteine. Catalyzes the S-adenosylmethionine monomethyl esterification of trans-aconitate. In Mycobacterium marinum (strain ATCC BAA-535 / M), this protein is Trans-aconitate 2-methyltransferase.